A 125-amino-acid polypeptide reads, in one-letter code: Small ribosomal subunit protein uS13 (125 aa).

This sequence belongs to the universal ribosomal protein uS13 family. As to quaternary structure, part of the 30S ribosomal subunit. Forms a loose heterodimer with protein S19. Forms two bridges to the 50S subunit in the 70S ribosome.

In terms of biological role, located at the top of the head of the 30S subunit, it contacts several helices of the 16S rRNA. In the 70S ribosome it contacts the 23S rRNA (bridge B1a) and protein L5 of the 50S subunit (bridge B1b), connecting the 2 subunits; these bridges are implicated in subunit movement. Contacts the tRNAs in the A and P-sites. The polypeptide is Small ribosomal subunit protein uS13 (Gluconobacter oxydans (strain 621H) (Gluconobacter suboxydans)).